A 697-amino-acid polypeptide reads, in one-letter code: T-related protein (697 aa).

The segment at 1 to 60 is disordered; it reads MTTSHILSAVDPTTGLSGNVSGGGGGGGAGGGAGSGSPQHVTHNGHGHGHGLGGVAAVSG. 2 stretches are compositionally biased toward gly residues: residues 20-35 and 50-60; these read VSGGGGGGGAGGGAGS and HGLGGVAAVSG. Positions 96–264 form a DNA-binding region, T-box; sequence LWLRFQNLTN…YNPFAKAFLD (169 aa). The segment covering 316–330 has biased composition (low complexity); that stretch reads SVSSAESVGPSSGGS. Disordered regions lie at residues 316–407 and 462–488; these read SVSS…GGIG and VCSGRNISSHNSPSPTNGSPSYTTSSP. Residues 337-351 are compositionally biased toward polar residues; that stretch reads SLSSRSVAPTRTTPY. Low complexity-rich tracts occupy residues 352–373, 381–401, and 469–488; these read SRPRVVSGSGSNGSAGNASSTS, QTPTSLHSTSTGSVSTSVSSS, and SSHNSPSPTNGSPSYTTSSP.

The protein resides in the nucleus. Functionally, required for the specification of the hindgut and anal pads. This Drosophila melanogaster (Fruit fly) protein is T-related protein (byn).